The sequence spans 87 residues: Exodeoxyribonuclease 7 small subunit (87 aa).

The protein belongs to the XseB family. As to quaternary structure, heterooligomer composed of large and small subunits.

The protein resides in the cytoplasm. The catalysed reaction is Exonucleolytic cleavage in either 5'- to 3'- or 3'- to 5'-direction to yield nucleoside 5'-phosphates.. Bidirectionally degrades single-stranded DNA into large acid-insoluble oligonucleotides, which are then degraded further into small acid-soluble oligonucleotides. The chain is Exodeoxyribonuclease 7 small subunit from Solidesulfovibrio magneticus (strain ATCC 700980 / DSM 13731 / RS-1) (Desulfovibrio magneticus).